The chain runs to 473 residues: Phosphatidylserine synthase 1 (473 aa).

Residues 1–35 (MAACVGSRTLSKDDVNYRLHFRMINEQQVEDITLE) lie on the Cytoplasmic side of the membrane. The helical transmembrane segment at 36–56 (FFYRPHTITLLSFTILSLMAF) threads the bilayer. Topologically, residues 57-72 (AFTRDDSVPEENIWRG) are lumenal. Residues 73-93 (ILSVIFFFLIISVLAFPNGPF) traverse the membrane as a helical segment. Residues 94–102 (TRPHPAIWR) lie on the Cytoplasmic side of the membrane. A helical transmembrane segment spans residues 103–123 (MVFGLSVLYFLFLVFVLFLNF). Topologically, residues 124–186 (EQVKAVMYWL…AMKALLIRSY (63 aa)) are lumenal. The chain crosses the membrane as a helical span at residues 187 to 207 (GLCWTISITWELTELFFMHLL). The Cytoplasmic segment spans residues 208 to 216 (PNFAECWWD). The helical transmembrane segment at 217-237 (QVILDILLCNGGGIWLGMVVC) threads the bilayer. At 238-286 (RFLEMRTYHWASFKDIHTTTGKIKRAVLQFTPASWTYVRWFDPKSSFQR) the chain is on the lumenal side. A helical transmembrane segment spans residues 287 to 307 (VAGIYLFMIIWQLTELNTFFL). Topologically, residues 308 to 319 (KHIFVFQASHPL) are cytoplasmic. The chain crosses the membrane as a helical span at residues 320–342 (SWGRILFIGIITAPTVRQYYAYL). Residues 343 to 355 (TDTQCKRVGTQCW) are Lumenal-facing. A helical membrane pass occupies residues 356–376 (VFGVIAFLEAIVCIKFGQDLF). The Cytoplasmic portion of the chain corresponds to 377 to 380 (SKTQ). A helical transmembrane segment spans residues 381-401 (ILYVVFWLLCVAFTTFLCLYG). At 402 to 473 (MVWYAEYYGH…SKVTNGIGKK (72 aa)) the chain is on the lumenal side. The interval 420–473 (EDSPYSPDASWLHSKFSKGADNSPPKHPVNSESHSSRRRNRHSRSKVTNGIGKK) is disordered. A compositionally biased stretch (basic residues) spans 455-464 (SRRRNRHSRS).

This sequence belongs to the phosphatidyl serine synthase family.

It localises to the endoplasmic reticulum membrane. It carries out the reaction a 1,2-diacyl-sn-glycero-3-phosphoethanolamine + L-serine = a 1,2-diacyl-sn-glycero-3-phospho-L-serine + ethanolamine. The enzyme catalyses a 1,2-diacyl-sn-glycero-3-phosphocholine + L-serine = a 1,2-diacyl-sn-glycero-3-phospho-L-serine + choline. The protein operates within phospholipid metabolism; phosphatidylserine biosynthesis. Catalyzes a base-exchange reaction in which the polar head group of phosphatidylethanolamine (PE) or phosphatidylcholine (PC) is replaced by L-serine. Catalyzes mainly the conversion of phosphatidylcholine but also converts, in vitro and to a lesser extent, phosphatidylethanolamine. This is Phosphatidylserine synthase 1 (PTDSS1) from Gallus gallus (Chicken).